The sequence spans 1040 residues: Contactin-2 (1040 aa).

Residues 1 to 30 (MGTATRRKPHLLLVAAVALVSSSAWSSALG) form the signal peptide. 6 Ig-like C2-type domains span residues 43–128 (PLSV…AILR), 133–222 (QEFS…SVFS), 239–322 (PSIK…GRII), 327–411 (PEWL…AELA), 417–504 (PDFR…GILS), and 509–603 (TKIT…ATVL). 4 disulfide bridges follow: Cys-61-Cys-111, Cys-155-Cys-207, Cys-261-Cys-306, and Cys-348-Cys-395. N-linked (GlcNAc...) asparagine glycans are attached at residues Asn-76, Asn-198, and Asn-204. Asn-461, Asn-477, Asn-498, and Asn-525 each carry an N-linked (GlcNAc...) asparagine glycan. Fibronectin type-III domains are found at residues 610 to 708 (PPGG…TREA), 713 to 810 (APSG…SAEE), 815 to 910 (APTK…TMKP), and 915 to 1006 (PPGN…NGGT). The interval 694 to 720 (GEPSGPSSKIRTREAAPSVAPSGLSGG) is disordered. Residues 794–796 (RGD) carry the Cell attachment site motif. N-linked (GlcNAc...) asparagine glycans are attached at residues Asn-830, Asn-904, Asn-918, and Asn-940. The disordered stretch occupies residues 894–919 (AGTGPASPSANATTMKPPPRRPPGNI). Asn-1012 carries the GPI-anchor amidated asparagine lipid modification. A propeptide spans 1013 to 1040 (MAVRPAPHPGTVISHSVAMLILIGSLEL) (removed in mature form).

It belongs to the immunoglobulin superfamily. Contactin family.

The protein localises to the cell membrane. In conjunction with another transmembrane protein, CNTNAP2, contributes to the organization of axonal domains at nodes of Ranvier by maintaining voltage-gated potassium channels at the juxtaparanodal region. May be involved in cell adhesion. The protein is Contactin-2 (CNTN2) of Homo sapiens (Human).